Consider the following 517-residue polypeptide: MAAQLLEEKLTCAICLGLYQDPVTLPCGHNFCGACIRDWWDRCGKACPECREPFPDGAELRRNVALSGVLEVVRAGPARDPGPDPGPGPDPAARCPRHGRPLELFCRTEGRCVCSVCTVRECRLHERALLDAERLKREAQLRASLEVTQQQATQAEGQLLELRKQSSQIQNSACILASWVSGKFSSLLQALEIQHTTALRSIEVAKTQALAQARDEEQRLRVHLEAVARHGCRIRELLEQVDEQTFLQESQLLQPPGPLGPLTPLQWDEDQQLGDLKQLLSRLCGLLLEEGSHPGAPAKPVDLAPVEAPGPLAPVPSTVCPLRRKLWQNYRNLTFDPVSANRHFYLSRQDQQVKHCRQSRGPGGPGSFELWQVQCAQSFQAGHHYWEVRASDHSVTLGVSYPQLPRCRLGPHTDNIGRGPCSWGLCVQEDSLQAWHNGEAQRLPGVSGRLLGMDLDLASGCLTFYSLEPQTQPLYTFHALFNQPLTPVFWLLEGRTLTLCHQPGAVFPLGPQEEVLS.

Ala-2 carries the post-translational modification N-acetylalanine. Residues 12-51 form an RING-type zinc finger; it reads CAICLGLYQDPVTLPCGHNFCGACIRDWWDRCGKACPECR. The interval 75-94 is disordered; it reads AGPARDPGPDPGPGPDPAAR. The B box-type zinc finger occupies 90–137; the sequence is DPAARCPRHGRPLELFCRTEGRCVCSVCTVRECRLHERALLDAERLKR. Zn(2+)-binding residues include Cys-95, His-98, Cys-117, and His-125. A coiled-coil region spans residues 139–227; sequence AQLRASLEVT…QRLRVHLEAV (89 aa). The residue at position 185 (Ser-185) is a Phosphoserine. Lys-206 participates in a covalent cross-link: (Microbial infection) Glycyl lysine isopeptide (Lys-Gly) (interchain with G-Cter in ubiquitin). The 194-residue stretch at 313-506 folds into the B30.2/SPRY domain; it reads APVPSTVCPL…LTLCHQPGAV (194 aa).

It belongs to the TRIM/RBCC family. As to quaternary structure, homo-multimerizes. Interacts with ARRDC4.

It localises to the cytoplasm. It carries out the reaction S-ubiquitinyl-[E2 ubiquitin-conjugating enzyme]-L-cysteine + [acceptor protein]-L-lysine = [E2 ubiquitin-conjugating enzyme]-L-cysteine + N(6)-ubiquitinyl-[acceptor protein]-L-lysine.. The protein operates within protein modification; protein ubiquitination. Functionally, E3 ubiquitin ligase that plays a role in several processes including innate immnity, autophagy or inflammation. Negatively regulates miRNAs by modulating the ubiquitination and stability of TNRC6A, a protein involved in RNA-mediated gene silencing by both micro-RNAs (miRNAs) and short interfering RNAs. This ubiquitination results in the suppressed expression of miR-138-5p leading to increased autophagy. Upon enteroviral infection, promotes 'Lys-63'-mediated ubiquitination activation of IFIH1/MDA5 leading to innate signaling cascade. Mechanistically, selectively recognizes MDA5 filaments that occur on dsRNAs. Plays also a role in limitation of inflammation through different mechanisms. First, promotes 'Lys-48'-mediated ubiquitination of VCAM1 leading to its degradation and limitation of LPS-induced lung inflammation. In addition, negatively regulates inflammasome activation by promoting 'lys48'-linked ubiquitination of NLRP3 which is critical for the inhibition of NLRP3 inflammasome activation in resting macrophages. The chain is E3 ubiquitin-protein ligase TRIM65 (TRIM65) from Homo sapiens (Human).